A 360-amino-acid chain; its full sequence is Probable dual-specificity RNA methyltransferase RlmN (360 aa).

The active-site Proton acceptor is the glutamate 97. Residues 103-330 form the Radical SAM core domain; it reads DGDRLTFCIS…TAVRRSRGLD (228 aa). Cysteine 110 and cysteine 335 form a disulfide bridge. [4Fe-4S] cluster-binding residues include cysteine 117, cysteine 121, and cysteine 124. S-adenosyl-L-methionine is bound by residues 165-166, serine 197, 220-222, and histidine 292; these read GE and SIH. The active-site S-methylcysteine intermediate is the cysteine 335.

This sequence belongs to the radical SAM superfamily. RlmN family. It depends on [4Fe-4S] cluster as a cofactor.

Its subcellular location is the cytoplasm. It carries out the reaction adenosine(2503) in 23S rRNA + 2 reduced [2Fe-2S]-[ferredoxin] + 2 S-adenosyl-L-methionine = 2-methyladenosine(2503) in 23S rRNA + 5'-deoxyadenosine + L-methionine + 2 oxidized [2Fe-2S]-[ferredoxin] + S-adenosyl-L-homocysteine. It catalyses the reaction adenosine(37) in tRNA + 2 reduced [2Fe-2S]-[ferredoxin] + 2 S-adenosyl-L-methionine = 2-methyladenosine(37) in tRNA + 5'-deoxyadenosine + L-methionine + 2 oxidized [2Fe-2S]-[ferredoxin] + S-adenosyl-L-homocysteine. Its function is as follows. Specifically methylates position 2 of adenine 2503 in 23S rRNA and position 2 of adenine 37 in tRNAs. In Gemmatimonas aurantiaca (strain DSM 14586 / JCM 11422 / NBRC 100505 / T-27), this protein is Probable dual-specificity RNA methyltransferase RlmN.